Here is a 388-residue protein sequence, read N- to C-terminus: Histone H2A.Y (388 aa).

LRR repeat units follow at residues 54 to 75, 76 to 96, and 100 to 121; these read SLQM…PHVP, SLIR…QYLR, and HLQT…KRLG. One can recognise an LRRCT domain in the interval 134 to 172; it reads NPVVNTNNYRNLVFNLFPSLVILDTLDKNGIDQEKAALD. The disordered stretch occupies residues 256-279; sequence RKAPASRNGGVPSKAGKGKMNAFS.

It belongs to the histone H2A family. As to quaternary structure, the nucleosome is a histone octamer containing two molecules each of H2A, H2B, H3 and H4 assembled in one H3-H4 heterotetramer and two H2A-H2B heterodimers. The octamer wraps approximately 147 bp of DNA.

The protein localises to the nucleus. It is found in the chromosome. In terms of biological role, variant histone H2A which replaces conventional H2A in a subset of nucleosomes. Nucleosomes wrap and compact DNA into chromatin, limiting DNA accessibility to the cellular machineries which require DNA as a template. Histones thereby play a central role in transcription regulation, DNA repair, DNA replication and chromosomal stability. DNA accessibility is regulated via a complex set of post-translational modifications of histones, also called histone code, and nucleosome remodeling. In Tetrahymena thermophila (strain SB210), this protein is Histone H2A.Y (HTAY).